An 81-amino-acid polypeptide reads, in one-letter code: MAVKIRLKRLGEKKNPFYRIIVADSRSPRNGRFIDEIGTYDPNYDPCKLNIDAEAAKKWLSNGAQPTEVVGKLFKMAGIEK.

The protein belongs to the bacterial ribosomal protein bS16 family.

The sequence is that of Small ribosomal subunit protein bS16 from Lachnospira eligens (strain ATCC 27750 / DSM 3376 / VPI C15-48 / C15-B4) (Eubacterium eligens).